The sequence spans 350 residues: Homoserine O-succinyltransferase (350 aa).

Cys146 serves as the catalytic Acyl-thioester intermediate. Lys167 and Ser196 together coordinate substrate. Catalysis depends on His239, which acts as the Proton acceptor. Glu241 is a catalytic residue. A substrate-binding site is contributed by Arg253.

Belongs to the MetA family.

It is found in the cytoplasm. It carries out the reaction L-homoserine + succinyl-CoA = O-succinyl-L-homoserine + CoA. It participates in amino-acid biosynthesis; L-methionine biosynthesis via de novo pathway; O-succinyl-L-homoserine from L-homoserine: step 1/1. Transfers a succinyl group from succinyl-CoA to L-homoserine, forming succinyl-L-homoserine. This chain is Homoserine O-succinyltransferase, found in Cardiobacterium hominis (strain ATCC 15826 / DSM 8339 / NCTC 10426 / 6573).